The chain runs to 238 residues: Probable transcriptional regulatory protein SUB0364 (238 aa).

It belongs to the TACO1 family. YeeN subfamily.

The protein localises to the cytoplasm. This Streptococcus uberis (strain ATCC BAA-854 / 0140J) protein is Probable transcriptional regulatory protein SUB0364.